Reading from the N-terminus, the 142-residue chain is Small ribosomal subunit protein uS12 (142 aa).

It belongs to the universal ribosomal protein uS12 family. Part of the 30S ribosomal subunit.

Functionally, with S4 and S5 plays an important role in translational accuracy. Located at the interface of the 30S and 50S subunits. This Methanosarcina mazei (strain ATCC BAA-159 / DSM 3647 / Goe1 / Go1 / JCM 11833 / OCM 88) (Methanosarcina frisia) protein is Small ribosomal subunit protein uS12.